The primary structure comprises 372 residues: L-selectin (372 aa).

Positions 1 to 28 are cleaved as a signal peptide; it reads MIFPWKCQSTQRDLWNIFKLWGWTMLCC. Residues 29–38 constitute a propeptide that is removed on maturation; sequence DFLAHHGTDC. The Extracellular segment spans residues 39-332; that stretch reads WTYHYSEKPM…FSMIKEGDYN (294 aa). Residues 55–155 enclose the C-type lectin domain; that stretch reads RFCRDNYTDL…ACHKLKAALC (101 aa). Disulfide bonds link Cys-57–Cys-155, Cys-128–Cys-147, Cys-128–Cys-160, Cys-160–Cys-171, Cys-165–Cys-180, Cys-182–Cys-191, Cys-197–Cys-241, Cys-227–Cys-254, Cys-259–Cys-303, and Cys-289–Cys-316. N-linked (GlcNAc...) asparagine glycans are attached at residues Asn-60 and Asn-104. Ca(2+)-binding residues include Glu-118, Asn-120, Glu-126, Asn-143, and Asp-144. One can recognise an EGF-like domain in the interval 156 to 192; the sequence is YTASCQPWSCSGHGECVEIINNYTCNCDVGYYGPQCQ. Asn-177 is a glycosylation site (N-linked (GlcNAc...) asparagine). 2 consecutive Sushi domains span residues 195-256 and 257-318; these read IQCE…TCQV and IQCE…ICQK. 4 N-linked (GlcNAc...) asparagine glycosylation sites follow: Asn-216, Asn-232, Asn-246, and Asn-271. The chain crosses the membrane as a helical span at residues 333-355; sequence PLFIPVAVMVTAFSGLAFIIWLA. The Cytoplasmic segment spans residues 356-372; the sequence is RRLKKGKKSKRSMDDPY.

The protein belongs to the selectin/LECAM family. In terms of assembly, interaction with SELPLG/PSGL1 and PODXL2 is required for promoting recruitment and rolling of leukocytes. This interaction is dependent on the sialyl Lewis X glycan modification of SELPLG and PODXL2, and tyrosine sulfation modifications of SELPLG. Sulfation on 'Tyr-51' of SELPLG is important for L-selectin binding. In terms of processing, N-glycosylated.

The protein resides in the cell membrane. Functionally, calcium-dependent lectin that mediates cell adhesion by binding to glycoproteins on neighboring cells. Mediates the adherence of lymphocytes to endothelial cells of high endothelial venules in peripheral lymph nodes. Promotes initial tethering and rolling of leukocytes in endothelia. The protein is L-selectin (SELL) of Pan troglodytes (Chimpanzee).